Here is a 215-residue protein sequence, read N- to C-terminus: Chaperone protein TorD (215 aa).

The protein belongs to the TorD/DmsD family. TorD subfamily.

It localises to the cytoplasm. Involved in the biogenesis of TorA. Acts on TorA before the insertion of the molybdenum cofactor and, as a result, probably favors a conformation of the apoenzyme that is competent for acquiring the cofactor. In Shewanella piezotolerans (strain WP3 / JCM 13877), this protein is Chaperone protein TorD.